The sequence spans 207 residues: Interleukin-6 (207 aa).

The N-terminal stretch at 1–20 (MNSLSTSAFSLGLLLVMATA) is a signal peptide. A disulfide bridge links cysteine 67 with cysteine 73. A Phosphoserine modification is found at serine 76. Residues cysteine 96 and cysteine 106 are joined by a disulfide bond.

It belongs to the IL-6 superfamily. Component of a hexamer of two molecules each of IL6, IL6R and IL6ST; first binds to IL6R to associate with the signaling subunit IL6ST. Interacts with IL6R (via the N-terminal ectodomain); this interaction may be affected by IL6R-binding with SORL1, hence decreasing IL6 cis signaling. Interacts with SORL1 (via the N-terminal ectodomain); this interaction leads to IL6 internalization and lysosomal degradation. May form a trimeric complex with the soluble SORL1 ectodomain and soluble IL6R receptor; this interaction might stabilize circulating IL6, hence promoting IL6 trans signaling.

It localises to the secreted. Functionally, cytokine with a wide variety of biological functions in immunity, tissue regeneration, and metabolism. Binds to IL6R, then the complex associates to the signaling subunit IL6ST/gp130 to trigger the intracellular IL6-signaling pathway. The interaction with the membrane-bound IL6R and IL6ST stimulates 'classic signaling', whereas the binding of IL6 and soluble IL6R to IL6ST stimulates 'trans-signaling'. Alternatively, 'cluster signaling' occurs when membrane-bound IL6:IL6R complexes on transmitter cells activate IL6ST receptors on neighboring receiver cells. Its function is as follows. IL6 is a potent inducer of the acute phase response. Rapid production of IL6 contributes to host defense during infection and tissue injury, but excessive IL6 synthesis is involved in disease pathology. In the innate immune response, is synthesized by myeloid cells, such as macrophages and dendritic cells, upon recognition of pathogens through toll-like receptors (TLRs) at the site of infection or tissue injury. In the adaptive immune response, is required for the differentiation of B cells into immunoglobulin-secreting cells. Plays a major role in the differentiation of CD4(+) T cell subsets. Essential factor for the development of T follicular helper (Tfh) cells that are required for the induction of germinal-center formation. Required to drive naive CD4(+) T cells to the Th17 lineage. Also required for proliferation of myeloma cells and the survival of plasmablast cells. Acts as an essential factor in bone homeostasis and on vessels directly or indirectly by induction of VEGF, resulting in increased angiogenesis activity and vascular permeability. Induces, through 'trans-signaling' and synergistically with IL1B and TNF, the production of VEGF. Involved in metabolic controls, is discharged into the bloodstream after muscle contraction increasing lipolysis and improving insulin resistance. 'Trans-signaling' in central nervous system also regulates energy and glucose homeostasis. Mediates, through GLP-1, crosstalk between insulin-sensitive tissues, intestinal L cells and pancreatic islets to adapt to changes in insulin demand. Also acts as a myokine. Plays a protective role during liver injury, being required for maintenance of tissue regeneration. Also has a pivotal role in iron metabolism by regulating HAMP/hepcidin expression upon inflammation or bacterial infection. Through activation of IL6ST-YAP-NOTCH pathway, induces inflammation-induced epithelial regeneration. The sequence is that of Interleukin-6 (IL6) from Vulpes vulpes (Red fox).